Reading from the N-terminus, the 299-residue chain is Oxygen-dependent coproporphyrinogen-III oxidase (299 aa).

Serine 92 is a binding site for substrate. A divalent metal cation contacts are provided by histidine 96 and histidine 106. Histidine 106 functions as the Proton donor in the catalytic mechanism. A substrate-binding site is contributed by asparagine 108–arginine 110. Histidine 145 and histidine 175 together coordinate a divalent metal cation. The important for dimerization stretch occupies residues tyrosine 239 to glutamate 274. Glycine 257–arginine 259 serves as a coordination point for substrate.

The protein belongs to the aerobic coproporphyrinogen-III oxidase family. As to quaternary structure, homodimer. A divalent metal cation is required as a cofactor.

Its subcellular location is the cytoplasm. It carries out the reaction coproporphyrinogen III + O2 + 2 H(+) = protoporphyrinogen IX + 2 CO2 + 2 H2O. The protein operates within porphyrin-containing compound metabolism; protoporphyrin-IX biosynthesis; protoporphyrinogen-IX from coproporphyrinogen-III (O2 route): step 1/1. Involved in the heme biosynthesis. Catalyzes the aerobic oxidative decarboxylation of propionate groups of rings A and B of coproporphyrinogen-III to yield the vinyl groups in protoporphyrinogen-IX. The chain is Oxygen-dependent coproporphyrinogen-III oxidase from Xanthomonas axonopodis pv. citri (strain 306).